Here is a 189-residue protein sequence, read N- to C-terminus: Myb-like protein T (189 aa).

Residues Asn-121–Gln-172 form the Myb-like domain.

This is Myb-like protein T (mybT) from Dictyostelium discoideum (Social amoeba).